A 31-amino-acid polypeptide reads, in one-letter code: Zinc metalloproteinase alsophinase (31 aa).

Q1 carries the pyrrolidone carboxylic acid modification. The region spanning 9–31 (KYIEFYLVVDNGMFXKYSXXFTV) is the Peptidase M12B domain. E12 is a binding site for Ca(2+).

As to quaternary structure, monomer. Zn(2+) serves as cofactor. Post-translationally, contains 9 disulfide bonds. Expressed by the venom gland.

It localises to the secreted. Its activity is regulated as follows. Inhibited by 1,10-phenanthroline. In terms of biological role, snake venom zinc metalloprotease that has potent hemorrhagic activity, fibrinogenolytic activity on the alpha-subunit of human fibrinogen (FGA) in vitro and provokes necrosis in skin, muscle and lung tissues. May contribute to local edema and ecchymosis induced by venom. Hydrolyzes model substrate (beta-chain of insulin) at Ala(14)-Leu(15). The sequence is that of Zinc metalloproteinase alsophinase from Borikenophis portoricensis (Puerto Rican racer).